Consider the following 403-residue polypeptide: MTVEMKVERGLFDEVMVPCYNPMEMIPVKGQGSRIWDQNGNEYIDFAGGIAVSCLGHCHPVMVNALTEQAGKLWHLSNVMTNEPALRLAKKLTEVSFAERVFFANSGAEANEAALKLARRYAADVYGPEKSEIIAFKQGFHGRTFFTVTVGGQAAYSDGFGPKPGDVTHLPYNDIEALQAHISDRTCAVMMEPLQGEGGIIPPTAEFIQAVRELCDKHNALLVFDEVQTGNGRTGEFYAYQGLGVTPDILSTAKSLGGGFPIGAMLTTAKLAEHLKVGTHGSTYGGNPLACAVAEAVVTEVSKPETLQGVKEREQWFREGLAKLNEKYQIFAEIRGKGLLLGAALNEQWQGRARDVLVAAGKEGLLVLVAGANVVRFTPSLVITKQEIEEGFAKLDKAIASLV.

Pyridoxal 5'-phosphate contacts are provided by residues 107 to 108 and Phe140; that span reads GA. Arg143 serves as a coordination point for N(2)-acetyl-L-ornithine. Residue 225–228 participates in pyridoxal 5'-phosphate binding; it reads DEVQ. Lys254 bears the N6-(pyridoxal phosphate)lysine mark. Residue Ser282 participates in N(2)-acetyl-L-ornithine binding. Thr283 is a pyridoxal 5'-phosphate binding site.

This sequence belongs to the class-III pyridoxal-phosphate-dependent aminotransferase family. ArgD subfamily. Homodimer. Pyridoxal 5'-phosphate serves as cofactor.

Its subcellular location is the cytoplasm. The enzyme catalyses N(2)-acetyl-L-ornithine + 2-oxoglutarate = N-acetyl-L-glutamate 5-semialdehyde + L-glutamate. It functions in the pathway amino-acid biosynthesis; L-arginine biosynthesis; N(2)-acetyl-L-ornithine from L-glutamate: step 4/4. This Vibrio vulnificus (strain YJ016) protein is Acetylornithine aminotransferase.